The chain runs to 429 residues: Citrate synthase, plasmid (429 aa).

Active-site residues include H306 and D364.

Belongs to the citrate synthase family.

It catalyses the reaction oxaloacetate + acetyl-CoA + H2O = citrate + CoA + H(+). It functions in the pathway carbohydrate metabolism; tricarboxylic acid cycle; isocitrate from oxaloacetate: step 1/2. Functionally, the exact function of the plasmid-encoded citrate synthase is not clear, it could help nodulation by allowing the bacteria to use citrate as a chelator of iron and calcium. The sequence is that of Citrate synthase, plasmid (pcsA) from Rhizobium tropici.